Here is a 584-residue protein sequence, read N- to C-terminus: Cilia- and flagella-associated protein 184 (584 aa).

Composition is skewed to basic and acidic residues over residues 1-18 (MDSHYGDIEGKDRAEEGL), 42-57 (PEPKPEPEPTQGREPE), and 67-82 (SKAKDSEGIDYAHVEV). A disordered region spans residues 1–243 (MDSHYGDIEG…ASTEEFEWTA (243 aa)). A compositionally biased stretch (acidic residues) spans 119–146 (DKDEDEDEDEDEDEDEDEDEDEDEDEGE). Basic and acidic residues predominate over residues 189 to 232 (AKEKARESLKKRDSEEIEGTDRERHKSTEEQLHPGEAKEEEKQK). Coiled-coil stretches lie at residues 317–470 (LAML…SNVQ) and 530–561 (LLGKESLLRDLEEKVEKTEMLNRRLESLKRHH).

Belongs to the CFAP184 family. Forms a complex with CFAP263; the interaction is required for functional activity in cilia.

Its subcellular location is the cell projection. The protein localises to the cilium. It localises to the cytoplasm. The protein resides in the cytoskeleton. It is found in the microtubule organizing center. Its subcellular location is the centrosome. Functionally, in complex with CFAP263, acts as a regulator of ciliary beating that connects radial spoke 3 (RS3) to the inner dynein arm (IDA) and the nexin-dynein regulatory complex (N-DRC). The complex is positioned parallel to N-DRC and forms a connection between the arch at the base of RS3, the IDA tail and N-DRC. This chain is Cilia- and flagella-associated protein 184 (Cfap184), found in Mus musculus (Mouse).